Reading from the N-terminus, the 426-residue chain is MRSKDKISYFYDGDVGSVYFGPNHPMKPHRLCMTHHLILAYGLHSKMEVYRPHKAYPIEMAQFHSPDYVEFLQRINPENQNLFPNEMARYNLGEDCPVFEDLFEFCQLYAGGTIDAARRLNNKLCDIAINWAGGLHHAKKCDASGFCYINDLVLGILELLKHHPRVLYIDIDVHHGDGVEEAFYFTDRVMTVSFHKFGDKFFPGTGDVKEIGEREGKFYAINVPLKDGIDDSSFNRLFRTIISKVVEIYQPGAIVLQCGADSLARDRLGCFNLSIDGHAECVKFVKKFNLPLLVTGGGGYTKENVARCWTVETGILLDTELPNEIPENDYIKYFAPDFSLKIPGGHIENLNTKSYISSIKVQILENLRYIQHAPSVQMQEVPPDFYIPDFDEDEQNPDVRADQRSRDKQIQRDDEYFDGDNDNDAS.

Residues 6-318 form a histone deacetylase region; it reads KISYFYDGDV…WTVETGILLD (313 aa). Histidine 137 (proton donor/acceptor) is an active-site residue. Zn(2+)-binding residues include aspartate 172, histidine 174, and aspartate 261. The interval 383–426 is disordered; that stretch reads PDFYIPDFDEDEQNPDVRADQRSRDKQIQRDDEYFDGDNDNDAS. Residues 397 to 414 are compositionally biased toward basic and acidic residues; sequence PDVRADQRSRDKQIQRDD. Residues 415–426 show a composition bias toward acidic residues; sequence EYFDGDNDNDAS.

It belongs to the histone deacetylase family. HD type 1 subfamily. In terms of assembly, interacts with AHL22. Binds to farnesylated ASG2 in the cytosol. Zn(2+) is required as a cofactor.

It localises to the nucleus. The protein resides in the cytoplasm. Its subcellular location is the cytosol. The enzyme catalyses N(6)-acetyl-L-lysyl-[histone] + H2O = L-lysyl-[histone] + acetate. In terms of biological role, responsible for the deacetylation of lysine residues on the N-terminal part of the core histones (H2A, H2B, H3 and H4). Histone deacetylation gives a tag for epigenetic repression and plays an important role in transcriptional regulation, cell cycle progression and developmental events. Histone deacetylases act via the formation of large multiprotein complexes. This chain is Histone deacetylase 9 (HDA9), found in Arabidopsis thaliana (Mouse-ear cress).